The primary structure comprises 835 residues: Outer membrane usher protein FasD (835 aa).

Positions 1-21 (MNKYPPLLTMLIIGIGSNAVA) are cleaved as a signal peptide. Cys-810 and Cys-834 are disulfide-bonded.

Belongs to the fimbrial export usher family.

It is found in the cell outer membrane. Its function is as follows. Involved in the export and assembly of the 987P fimbriae subunits across the outer membrane. The protein is Outer membrane usher protein FasD (fasD) of Escherichia coli.